Consider the following 366-residue polypeptide: Tyrosine--tRNA ligase (366 aa).

Positions 41, 167, 171, 174, and 189 each coordinate L-tyrosine. Positions 241 to 245 (KMSKS) match the 'KMSKS' region motif. Position 244 (Lys-244) interacts with ATP.

It belongs to the class-I aminoacyl-tRNA synthetase family. TyrS type 4 subfamily. As to quaternary structure, homodimer.

It is found in the cytoplasm. It catalyses the reaction tRNA(Tyr) + L-tyrosine + ATP = L-tyrosyl-tRNA(Tyr) + AMP + diphosphate + H(+). Catalyzes the attachment of tyrosine to tRNA(Tyr) in a two-step reaction: tyrosine is first activated by ATP to form Tyr-AMP and then transferred to the acceptor end of tRNA(Tyr). The polypeptide is Tyrosine--tRNA ligase (Saccharolobus solfataricus (strain ATCC 35092 / DSM 1617 / JCM 11322 / P2) (Sulfolobus solfataricus)).